The following is a 259-amino-acid chain: Small ribosomal subunit protein uS7m (259 aa).

The N-terminal 39 residues, 1–39, are a transit peptide targeting the mitochondrion; sequence MLRLIKQPLFRCASSGHLMKESLVFIHQTRTFQVGKFTS. T157 bears the Phosphothreonine mark.

This sequence belongs to the universal ribosomal protein uS7 family. As to quaternary structure, component of the mitochondrial small ribosomal subunit (mt-SSU). Mature yeast 74S mitochondrial ribosomes consist of a small (37S) and a large (54S) subunit. The 37S small subunit contains a 15S ribosomal RNA (15S mt-rRNA) and at least 32 different proteins. The 54S large subunit contains a 21S rRNA (21S mt-rRNA) and at least 45 different proteins.

The protein localises to the mitochondrion. In terms of biological role, component of the mitochondrial ribosome (mitoribosome), a dedicated translation machinery responsible for the synthesis of mitochondrial genome-encoded proteins, including at least some of the essential transmembrane subunits of the mitochondrial respiratory chain. The mitoribosomes are attached to the mitochondrial inner membrane and translation products are cotranslationally integrated into the membrane. This Schizosaccharomyces pombe (strain 972 / ATCC 24843) (Fission yeast) protein is Small ribosomal subunit protein uS7m (rsm7).